We begin with the raw amino-acid sequence, 273 residues long: Diaminopimelate epimerase (273 aa).

Asn-11 and Asn-60 together coordinate substrate. Cys-69 serves as the catalytic Proton donor. Substrate contacts are provided by residues 70–71 (GN), Asn-181, and 199–200 (ER). Cys-209 serves as the catalytic Proton acceptor. 210-211 (GT) serves as a coordination point for substrate.

It belongs to the diaminopimelate epimerase family. In terms of assembly, homodimer.

The protein resides in the cytoplasm. It carries out the reaction (2S,6S)-2,6-diaminopimelate = meso-2,6-diaminopimelate. It functions in the pathway amino-acid biosynthesis; L-lysine biosynthesis via DAP pathway; DL-2,6-diaminopimelate from LL-2,6-diaminopimelate: step 1/1. In terms of biological role, catalyzes the stereoinversion of LL-2,6-diaminopimelate (L,L-DAP) to meso-diaminopimelate (meso-DAP), a precursor of L-lysine and an essential component of the bacterial peptidoglycan. The chain is Diaminopimelate epimerase from Helicobacter pylori (strain Shi470).